Consider the following 234-residue polypeptide: Thrombin-like enzyme contortrixobin (234 aa).

Residues 1-225 form the Peptidase S1 domain; sequence VVGGDECNIN…YNDWIQSIIA (225 aa). Disulfide bonds link cysteine 7–cysteine 139, cysteine 26–cysteine 42, cysteine 74–cysteine 232, cysteine 118–cysteine 186, cysteine 150–cysteine 165, and cysteine 176–cysteine 201. Catalysis depends on charge relay system residues histidine 41 and aspartate 86. Residue serine 180 is the Charge relay system of the active site.

In terms of assembly, monomer. In terms of processing, not glycosylated. Expressed by the venom gland.

The protein localises to the secreted. Strongly inhibited by diisopropylfluorophosphate (DFP) and to a lesser extent by PMSF, benzamidine and 4,6-diamidino-2-phenylindole. Low inhibition by hirudin. In terms of biological role, thrombin-like snake venom serine protease that cleaves beta chain of fibrinogen (FGB), releasing fibrinopeptide B. Has a coagulant activity activating blood coagulation factors V (F5) and XIII (F13A1). This Agkistrodon contortrix contortrix (Southern copperhead) protein is Thrombin-like enzyme contortrixobin.